The chain runs to 396 residues: L-lactate dehydrogenase (396 aa).

An FMN hydroxy acid dehydrogenase domain is found at 1 to 380 (MIISAASDYR…SQDSLVQELD (380 aa)). Y24 serves as a coordination point for substrate. Residues S106 and Q127 each contribute to the FMN site. Y129 lines the substrate pocket. T155 contributes to the FMN binding site. R164 provides a ligand contact to substrate. K251 serves as a coordination point for FMN. H275 functions as the Proton acceptor in the catalytic mechanism. R278 provides a ligand contact to substrate. 306–330 (DSGIRNGLDVVRMIALGADTVLLGR) contacts FMN.

It belongs to the FMN-dependent alpha-hydroxy acid dehydrogenase family. FMN serves as cofactor.

It is found in the cell inner membrane. It carries out the reaction (S)-lactate + A = pyruvate + AH2. Functionally, catalyzes the conversion of L-lactate to pyruvate. Is coupled to the respiratory chain. The sequence is that of L-lactate dehydrogenase from Escherichia fergusonii (strain ATCC 35469 / DSM 13698 / CCUG 18766 / IAM 14443 / JCM 21226 / LMG 7866 / NBRC 102419 / NCTC 12128 / CDC 0568-73).